The sequence spans 398 residues: Putative isocitrate lyase subunit B (398 aa).

This sequence belongs to the isocitrate lyase/PEP mutase superfamily. Isocitrate lyase family. Mg(2+) is required as a cofactor.

The catalysed reaction is D-threo-isocitrate = glyoxylate + succinate. Its function is as follows. Together with AceAa, they could catalyze the formation of succinate and glyoxylate from isocitrate. The sequence is that of Putative isocitrate lyase subunit B (aceAb) from Mycobacterium tuberculosis (strain ATCC 25618 / H37Rv).